The primary structure comprises 280 residues: Polyamine aminopropyltransferase 2 (280 aa).

The region spanning 2–237 is the PABS domain; sequence ELWLDEALEL…GIIGFTYCSK (236 aa). Glutamine 33 contacts S-methyl-5'-thioadenosine. Residues histidine 64 and aspartate 88 each coordinate spermidine. S-methyl-5'-thioadenosine-binding positions include glutamate 108 and 139–140; that span reads DG. Residue aspartate 157 is the Proton acceptor of the active site. Position 157-160 (157-160) interacts with spermidine; sequence DSSD. Residue proline 164 coordinates S-methyl-5'-thioadenosine.

This sequence belongs to the spermidine/spermine synthase family. As to quaternary structure, homodimer or homotetramer.

The protein localises to the cytoplasm. It catalyses the reaction S-adenosyl 3-(methylsulfanyl)propylamine + putrescine = S-methyl-5'-thioadenosine + spermidine + H(+). Its pathway is amine and polyamine biosynthesis; spermidine biosynthesis; spermidine from putrescine: step 1/1. Catalyzes the irreversible transfer of a propylamine group from the amino donor S-adenosylmethioninamine (decarboxy-AdoMet) to putrescine (1,4-diaminobutane) to yield spermidine. The protein is Polyamine aminopropyltransferase 2 of Leptospira interrogans serogroup Icterohaemorrhagiae serovar Lai (strain 56601).